The primary structure comprises 82 residues: MVKLRLKRYGRKKQPSYRIVVMDSRNKRDGKAIEELGFYNPINNETRVNISKILQRLSQGAQATKTVKNILNKAQIVAEKNN.

This sequence belongs to the bacterial ribosomal protein bS16 family.

Its subcellular location is the plastid. The protein resides in the chloroplast. This Pyropia yezoensis (Susabi-nori) protein is Small ribosomal subunit protein bS16c.